The primary structure comprises 470 residues: Tryptophan synthase beta chain 1, chloroplastic (470 aa).

Residues 1 to 10 are compositionally biased toward polar residues; it reads MAASGTSATF. Residues 1-24 are disordered; the sequence is MAASGTSATFRASVSSAPSSSSQL. Residues 12–22 show a composition bias toward low complexity; sequence ASVSSAPSSSS. Lys-165 carries the N6-(pyridoxal phosphate)lysine modification.

This sequence belongs to the TrpB family. Tetramer of two alpha and two beta chains. Pyridoxal 5'-phosphate is required as a cofactor.

It is found in the plastid. It localises to the chloroplast. The enzyme catalyses (1S,2R)-1-C-(indol-3-yl)glycerol 3-phosphate + L-serine = D-glyceraldehyde 3-phosphate + L-tryptophan + H2O. The protein operates within amino-acid biosynthesis; L-tryptophan biosynthesis; L-tryptophan from chorismate: step 5/5. In terms of biological role, the beta subunit is responsible for the synthesis of L-tryptophan from indole and L-serine. In Arabidopsis thaliana (Mouse-ear cress), this protein is Tryptophan synthase beta chain 1, chloroplastic (TSB1).